The following is a 148-amino-acid chain: PTS system fructose-like EIIA component (148 aa).

The PTS EIIA type-2 domain occupies 2 to 145 (AALTASCIDL…DQVLALLNQT (144 aa)). Catalysis depends on histidine 64, which acts as the Tele-phosphohistidine intermediate. Histidine 64 bears the Phosphohistidine; by HPr mark.

The protein localises to the cytoplasm. In terms of biological role, the phosphoenolpyruvate-dependent sugar phosphotransferase system (sugar PTS), a major carbohydrate active transport system, catalyzes the phosphorylation of incoming sugar substrates concomitantly with their translocation across the cell membrane. The enzyme II FrvAB PTS system is involved in fructose transport. The chain is PTS system fructose-like EIIA component from Escherichia coli (strain K12).